Consider the following 123-residue polypeptide: Large ribosomal subunit protein bL12 (123 aa).

It belongs to the bacterial ribosomal protein bL12 family. As to quaternary structure, homodimer. Part of the ribosomal stalk of the 50S ribosomal subunit. Forms a multimeric L10(L12)X complex, where L10 forms an elongated spine to which 2 to 4 L12 dimers bind in a sequential fashion. Binds GTP-bound translation factors.

Functionally, forms part of the ribosomal stalk which helps the ribosome interact with GTP-bound translation factors. Is thus essential for accurate translation. The polypeptide is Large ribosomal subunit protein bL12 (Clostridium botulinum (strain ATCC 19397 / Type A)).